A 91-amino-acid chain; its full sequence is MARSVKKGPFVDDHLMKKVLSAKAEGSKKPIKTWSRRSMVLPDMVGITFNVHNGRQFVPVYVTENHIGYKLGEFAPTRTFKGHKGSVQKKG.

Belongs to the universal ribosomal protein uS19 family.

Protein S19 forms a complex with S13 that binds strongly to the 16S ribosomal RNA. This is Small ribosomal subunit protein uS19 from Sulfurimonas denitrificans (strain ATCC 33889 / DSM 1251) (Thiomicrospira denitrificans (strain ATCC 33889 / DSM 1251)).